Here is a 199-residue protein sequence, read N- to C-terminus: Recombination protein RecR (199 aa).

The segment at 57–72 (CSICGNITESDPCEIC) adopts a C4-type zinc-finger fold. Residues 80 to 176 (STIMVVEQPK…KVTRLAAGLA (97 aa)) enclose the Toprim domain.

Belongs to the RecR family.

In terms of biological role, may play a role in DNA repair. It seems to be involved in an RecBC-independent recombinational process of DNA repair. It may act with RecF and RecO. This Lactobacillus johnsonii (strain CNCM I-12250 / La1 / NCC 533) protein is Recombination protein RecR.